The following is a 500-amino-acid chain: Na(+)/H(+) antiporter NhaB (500 aa).

13 helical membrane passes run 11–31, 34–54, 58–78, 96–116, 129–149, 150–170, 205–225, 241–261, 311–331, 350–370, 394–414, 450–470, and 477–497; these read HGFL…FLVL, LLLV…EFIF, MALK…ALLL, VILL…LLLF, AILS…LDAL, TVTA…HRVA, LLMH…VGEP, FFFK…LTCV, ILII…LMVI, FQDA…VAVI, MLYL…VATI, ATPN…APLI, and MVWM…WAVT.

Belongs to the NhaB Na(+)/H(+) (TC 2.A.34) antiporter family.

Its subcellular location is the cell inner membrane. It catalyses the reaction 2 Na(+)(in) + 3 H(+)(out) = 2 Na(+)(out) + 3 H(+)(in). Its function is as follows. Na(+)/H(+) antiporter that extrudes sodium in exchange for external protons. This is Na(+)/H(+) antiporter NhaB from Pseudomonas putida (strain GB-1).